An 885-amino-acid polypeptide reads, in one-letter code: Leucine--tRNA ligase (885 aa).

A 'HIGH' region motif is present at residues 48–58; sequence PYPSGKLHMGH. A 'KMSKS' region motif is present at residues 639–643; it reads TMSKS. K642 contributes to the ATP binding site.

This sequence belongs to the class-I aminoacyl-tRNA synthetase family.

The protein resides in the cytoplasm. It carries out the reaction tRNA(Leu) + L-leucine + ATP = L-leucyl-tRNA(Leu) + AMP + diphosphate. In Bordetella parapertussis (strain 12822 / ATCC BAA-587 / NCTC 13253), this protein is Leucine--tRNA ligase.